The sequence spans 173 residues: Crossover junction endodeoxyribonuclease RuvC (173 aa).

Catalysis depends on residues Asp8, Glu67, and Asp139. Mg(2+) contacts are provided by Asp8, Glu67, and Asp139.

It belongs to the RuvC family. Homodimer which binds Holliday junction (HJ) DNA. The HJ becomes 2-fold symmetrical on binding to RuvC with unstacked arms; it has a different conformation from HJ DNA in complex with RuvA. In the full resolvosome a probable DNA-RuvA(4)-RuvB(12)-RuvC(2) complex forms which resolves the HJ. Mg(2+) serves as cofactor.

The protein resides in the cytoplasm. It carries out the reaction Endonucleolytic cleavage at a junction such as a reciprocal single-stranded crossover between two homologous DNA duplexes (Holliday junction).. Functionally, the RuvA-RuvB-RuvC complex processes Holliday junction (HJ) DNA during genetic recombination and DNA repair. Endonuclease that resolves HJ intermediates. Cleaves cruciform DNA by making single-stranded nicks across the HJ at symmetrical positions within the homologous arms, yielding a 5'-phosphate and a 3'-hydroxyl group; requires a central core of homology in the junction. The consensus cleavage sequence is 5'-(A/T)TT(C/G)-3'. Cleavage occurs on the 3'-side of the TT dinucleotide at the point of strand exchange. HJ branch migration catalyzed by RuvA-RuvB allows RuvC to scan DNA until it finds its consensus sequence, where it cleaves and resolves the cruciform DNA. This is Crossover junction endodeoxyribonuclease RuvC from Erwinia tasmaniensis (strain DSM 17950 / CFBP 7177 / CIP 109463 / NCPPB 4357 / Et1/99).